Here is a 480-residue protein sequence, read N- to C-terminus: Type VI lipase adapter protein Tla3 (480 aa).

Residues 410–458 (ISSPTPGKKPVHDPFGVDLLPQTASGDGPPPSADPVAPASRLTTRLPPG) are disordered.

Interacts with the Tle3 toxin on one side and with the H2-T6SS component VgrG2b on the other side.

The protein resides in the cytoplasm. In terms of biological role, adapter protein that targets and loads the Tle3 toxin onto the H2 type VI secretion system (H2-T6SS) machinery through an interaction with the TTR domain of VgrG2b. Seems specific for Tle3. The sequence is that of Type VI lipase adapter protein Tla3 from Pseudomonas aeruginosa (strain ATCC 15692 / DSM 22644 / CIP 104116 / JCM 14847 / LMG 12228 / 1C / PRS 101 / PAO1).